The primary structure comprises 789 residues: Aconitate hydratase, mitochondrial (789 aa).

Residues 1–32 (MFCKISRAPARMGSRIFTQSTLRSFSCAPVAA) constitute a mitochondrion transit peptide. Residues Gln106 and 199–201 (DSH) each bind substrate. The [4Fe-4S] cluster site is built by Cys392, Cys455, and Cys458. Substrate-binding positions include Arg481, Arg486, Arg613, and 676 to 677 (SR).

It belongs to the aconitase/IPM isomerase family. Monomer. Requires [4Fe-4S] cluster as cofactor.

The protein resides in the mitochondrion. It catalyses the reaction citrate = D-threo-isocitrate. The protein operates within carbohydrate metabolism; tricarboxylic acid cycle; isocitrate from oxaloacetate: step 2/2. Functionally, catalyzes the isomerization of citrate to isocitrate via cis-aconitate, a step in the citric acid cycle. The polypeptide is Aconitate hydratase, mitochondrial (Schizosaccharomyces pombe (strain 972 / ATCC 24843) (Fission yeast)).